A 1093-amino-acid chain; its full sequence is Receptor-mediated endocytosis protein 6 (1093 aa).

The 234-residue stretch at 156–389 (LKIAQVVCNL…EMMDALLVEK (234 aa)) folds into the Ras-GAP domain. Disordered regions lie at residues 547–610 (DLEK…GGEQ) and 643–669 (RSGSFVKPPPSGIPTSSSEQNLPDVAT). 2 stretches are compositionally biased toward polar residues: residues 568–577 (IDFSSGSAET) and 584–598 (DSTSVSPEPLTSTEE). Positions 955-1093 (HHRDKLLRGT…SAVEYIKTIL (139 aa)) constitute a VPS9 domain.

This sequence belongs to the GAPVD1 family. Interacts with GDP-bound rab-5. Interacts with alpha-adaptin.

The protein localises to the membrane. Its subcellular location is the cytoplasmic vesicle. It is found in the clathrin-coated vesicle. Functionally, acts both as a GTPase-activating protein (GAP) and a guanine nucleotide exchange factor (GEF), and participates in endocytosis. Acts by regulating the activation of rab-5 by exchanging bound GDP for free GTP at clathrin coated pits. This chain is Receptor-mediated endocytosis protein 6 (rme-6), found in Caenorhabditis elegans.